The following is a 393-amino-acid chain: Acetylornithine aminotransferase (393 aa).

Pyridoxal 5'-phosphate contacts are provided by residues 100 to 101 (GA) and Phe-133. A N(2)-acetyl-L-ornithine-binding site is contributed by Arg-136. 218 to 221 (DEVQ) provides a ligand contact to pyridoxal 5'-phosphate. Residue Lys-247 is modified to N6-(pyridoxal phosphate)lysine. Ser-274 provides a ligand contact to N(2)-acetyl-L-ornithine. Thr-275 serves as a coordination point for pyridoxal 5'-phosphate.

It belongs to the class-III pyridoxal-phosphate-dependent aminotransferase family. ArgD subfamily. In terms of assembly, homodimer. The cofactor is pyridoxal 5'-phosphate.

It localises to the cytoplasm. The catalysed reaction is N(2)-acetyl-L-ornithine + 2-oxoglutarate = N-acetyl-L-glutamate 5-semialdehyde + L-glutamate. It functions in the pathway amino-acid biosynthesis; L-arginine biosynthesis; N(2)-acetyl-L-ornithine from L-glutamate: step 4/4. The protein is Acetylornithine aminotransferase of Caldanaerobacter subterraneus subsp. tengcongensis (strain DSM 15242 / JCM 11007 / NBRC 100824 / MB4) (Thermoanaerobacter tengcongensis).